A 101-amino-acid polypeptide reads, in one-letter code: Apolipoprotein C-II (101 aa).

The N-terminal stretch at M1–G22 is a signal peptide. The lipid binding stretch occupies residues T66 to M74. Residues S78–E101 are lipoprotein lipase cofactor.

It belongs to the apolipoprotein C2 family. In terms of processing, proapolipoprotein C-II is synthesized as a sialic acid containing glycoprotein which is subsequently desialylated prior to its proteolytic processing. Post-translationally, proapolipoprotein C-II, the major form found in plasma undergoes proteolytic cleavage of its N-terminal hexapeptide to generate apolipoprotein C-II, which occurs as the minor form in plasma.

The protein localises to the secreted. Functionally, component of chylomicrons, very low-density lipoproteins (VLDL), low-density lipoproteins (LDL), and high-density lipoproteins (HDL) in plasma. Plays an important role in lipoprotein metabolism as an activator of lipoprotein lipase. Both proapolipoprotein C-II and apolipoprotein C-II can activate lipoprotein lipase. The chain is Apolipoprotein C-II (APOC2) from Tapirus indicus (Asiatic tapir).